Reading from the N-terminus, the 598-residue chain is Elongation factor 4 (598 aa).

Residues aspartate 2–arginine 184 enclose the tr-type G domain. Residues aspartate 14–threonine 19 and asparagine 131–aspartate 134 each bind GTP.

It belongs to the TRAFAC class translation factor GTPase superfamily. Classic translation factor GTPase family. LepA subfamily.

It localises to the cell inner membrane. The catalysed reaction is GTP + H2O = GDP + phosphate + H(+). Required for accurate and efficient protein synthesis under certain stress conditions. May act as a fidelity factor of the translation reaction, by catalyzing a one-codon backward translocation of tRNAs on improperly translocated ribosomes. Back-translocation proceeds from a post-translocation (POST) complex to a pre-translocation (PRE) complex, thus giving elongation factor G a second chance to translocate the tRNAs correctly. Binds to ribosomes in a GTP-dependent manner. This chain is Elongation factor 4, found in Syntrophus aciditrophicus (strain SB).